The chain runs to 104 residues: UPF0213 protein VIBHAR_05350 (104 aa).

Residues 7–82 (QRWSVYLIRN…KQLTKTKKEL (76 aa)) form the GIY-YIG domain.

This sequence belongs to the UPF0213 family.

The protein is UPF0213 protein VIBHAR_05350 of Vibrio campbellii (strain ATCC BAA-1116).